The following is a 356-amino-acid chain: Deoxyribonuclease-2-beta (356 aa).

A signal peptide spans 1–22 (MTAQPLKAALPLLFVALSGVLG). N-linked (GlcNAc...) asparagine glycosylation is found at Asn77, Asn98, Asn114, and Asn273.

The protein belongs to the DNase II family. As to expression, liver specific.

It is found in the lysosome. The catalysed reaction is Endonucleolytic cleavage to nucleoside 3'-phosphates and 3'-phosphooligonucleotide end-products.. In terms of biological role, hydrolyzes DNA under acidic conditions. Does not require divalent cations for activity. Participates in the degradation of nuclear DNA during lens cell differentiation. In Rattus norvegicus (Rat), this protein is Deoxyribonuclease-2-beta (Dnase2b).